The primary structure comprises 298 residues: 5'-AMP-activated protein kinase subunit beta (298 aa).

Residues 1 to 98 (MGNVQSQEGE…KTHQPYSGPC (98 aa)) form a disordered region. Positions 19–30 (QDATTTPDNANN) are enriched in polar residues. A compositionally biased stretch (acidic residues) spans 48–59 (LNQEGEMSDDNQ). A compositionally biased stretch (polar residues) spans 60 to 77 (QEGGNNRTSQNGTSGSSG). Positions 78 to 91 (HTKRRSQTSGKKTH) are enriched in basic residues. ADP is bound at residue 250–252 (DQS).

Belongs to the 5'-AMP-activated protein kinase beta subunit family. In terms of assembly, AMPK is a heterotrimer of an alpha catalytic subunit (ssp2), a beta (amk2) and a gamma non-catalytic subunits (cbs2). The beta subunit serves as a bridge between the catalytic and the regulatory subunit.

It is found in the cytoplasm. Its function is as follows. Beta subunit of AMP-activated protein kinase (AMPK), which is required for transcriptional, metabolic, and developmental adaptations in response to glucose limitation. Has a structural role, mediating heterotrimer formation, and a regulatory role, defining carbon source-regulated subcellular location and substrate specificity of the AMPK kinase complex. This is 5'-AMP-activated protein kinase subunit beta (amk2) from Schizosaccharomyces pombe (strain 972 / ATCC 24843) (Fission yeast).